Reading from the N-terminus, the 428-residue chain is Histidine--tRNA ligase (428 aa).

It belongs to the class-II aminoacyl-tRNA synthetase family. Homodimer.

Its subcellular location is the cytoplasm. It catalyses the reaction tRNA(His) + L-histidine + ATP = L-histidyl-tRNA(His) + AMP + diphosphate + H(+). The chain is Histidine--tRNA ligase from Lactobacillus helveticus (strain DPC 4571).